The chain runs to 547 residues: Chaperonin GroEL (547 aa).

ATP-binding positions include 30 to 33 (TLGP), K51, 87 to 91 (DGTTT), G415, 479 to 481 (DAA), and D495.

The protein belongs to the chaperonin (HSP60) family. As to quaternary structure, forms a cylinder of 14 subunits composed of two heptameric rings stacked back-to-back. Interacts with the co-chaperonin GroES.

The protein resides in the cytoplasm. It carries out the reaction ATP + H2O + a folded polypeptide = ADP + phosphate + an unfolded polypeptide.. Together with its co-chaperonin GroES, plays an essential role in assisting protein folding. The GroEL-GroES system forms a nano-cage that allows encapsulation of the non-native substrate proteins and provides a physical environment optimized to promote and accelerate protein folding. In Dichelobacter nodosus (strain VCS1703A), this protein is Chaperonin GroEL.